Reading from the N-terminus, the 91-residue chain is ATP synthase subunit c (91 aa).

Helical transmembrane passes span 4–24 (FTMC…GTGI) and 53–73 (IGLA…LIIL).

Belongs to the ATPase C chain family. In terms of assembly, F-type ATPases have 2 components, F(1) - the catalytic core - and F(0) - the membrane proton channel. F(1) has five subunits: alpha(3), beta(3), gamma(1), delta(1), epsilon(1). F(0) has three main subunits: a(1), b(2) and c(10-14). The alpha and beta chains form an alternating ring which encloses part of the gamma chain. F(1) is attached to F(0) by a central stalk formed by the gamma and epsilon chains, while a peripheral stalk is formed by the delta and b chains.

It localises to the cell inner membrane. Its function is as follows. F(1)F(0) ATP synthase produces ATP from ADP in the presence of a proton or sodium gradient. F-type ATPases consist of two structural domains, F(1) containing the extramembraneous catalytic core and F(0) containing the membrane proton channel, linked together by a central stalk and a peripheral stalk. During catalysis, ATP synthesis in the catalytic domain of F(1) is coupled via a rotary mechanism of the central stalk subunits to proton translocation. Functionally, key component of the F(0) channel; it plays a direct role in translocation across the membrane. A homomeric c-ring of between 10-14 subunits forms the central stalk rotor element with the F(1) delta and epsilon subunits. This chain is ATP synthase subunit c, found in Trichlorobacter lovleyi (strain ATCC BAA-1151 / DSM 17278 / SZ) (Geobacter lovleyi).